The chain runs to 300 residues: Ribosomal protein L11 methyltransferase (300 aa).

S-adenosyl-L-methionine contacts are provided by T152, G173, D195, and N234.

It belongs to the methyltransferase superfamily. PrmA family.

It localises to the cytoplasm. It catalyses the reaction L-lysyl-[protein] + 3 S-adenosyl-L-methionine = N(6),N(6),N(6)-trimethyl-L-lysyl-[protein] + 3 S-adenosyl-L-homocysteine + 3 H(+). Its function is as follows. Methylates ribosomal protein L11. This Burkholderia thailandensis (strain ATCC 700388 / DSM 13276 / CCUG 48851 / CIP 106301 / E264) protein is Ribosomal protein L11 methyltransferase.